The sequence spans 231 residues: Ion-translocating oxidoreductase complex subunit E (231 aa).

6 helical membrane passes run 18-38 (ALVQ…ATNA), 39-59 (LGLG…ISTL), 63-83 (TPAE…VSAV), 86-106 (LINA…PLIV), 125-145 (ALSA…MCVL), and 182-202 (PFLL…MLAG).

It belongs to the NqrDE/RnfAE family. The complex is composed of six subunits: RsxA, RsxB, RsxC, RsxD, RsxE and RsxG.

The protein localises to the cell inner membrane. Part of a membrane-bound complex that couples electron transfer with translocation of ions across the membrane. Required to maintain the reduced state of SoxR. This is Ion-translocating oxidoreductase complex subunit E from Escherichia coli (strain SMS-3-5 / SECEC).